A 3961-amino-acid polypeptide reads, in one-letter code: Replicase polyprotein 1ab (3961 aa).

Residues Cys8 to Cys28 form a C4-type; atypical zinc finger. Residues Glu69–Met180 form the Peptidase C31 domain. A PCP1-alpha region spans residues Glu69–Thr182. Residues Cys76 and His146 each act as for Nsp1-alpha papain-like cysteine proteinase activity in the active site. Positions Ile199 to Ser200 are important for host EIF2AK2 inhibition. A PCP1-beta region spans residues Asp263–Tyr382. Positions Asp263 to Gly383 constitute a Peptidase C32 domain. Residues Cys270 and His339 each act as for Nsp1-beta papain-like cysteine proteinase activity in the active site. The tract at residues Leu426–Pro513 is OTU-like. In terms of domain architecture, Peptidase C33 spans His428–Leu535. Catalysis depends on for Nsp2 cysteine proteinase activity residues Cys437 and His506. Disordered regions lie at residues Arg809–Glu862, Ala898–Gly979, and Asn1153–Pro1213. Residues Trp810–Val819 are compositionally biased toward pro residues. Transmembrane regions (helical) follow at residues Leu1266–Phe1286, Gly1296–Val1316, Ser1345–Ala1365, Ile1368–Val1388, Leu1583–Val1603, Ala1650–Ile1670, Cys1685–Phe1705, and Ile1719–Val1739. The interval Leu1266–Val1388 is HD1. The interval Leu1583–Trp1745 is HD2. Residues Gly1810–Glu2013 form the Peptidase S32 domain. Catalysis depends on charge relay system; for 3C-like serine proteinase activity residues His1848, Asp1873, and Ser1927. 5 consecutive transmembrane segments (helical) span residues Leu2012 to Met2032, Phe2060 to Ile2080, Trp2092 to Thr2112, Ser2137 to Phe2157, and Gln2164 to Gly2184. An HD3 region spans residues Trp2036 to Phe2157. The segment at Pro2329–Asp2358 is disordered. Residues Thr2330–Pro2344 show a composition bias toward pro residues. The NiRAN domain occupies Ile2488–Gly2651. The region spanning Gly2890–Tyr3024 is the RdRp catalytic domain. The AV ZBD domain maps to Gly3145–Leu3208. The Zn(2+) site is built by Cys3151, Cys3154, Cys3164, Cys3169, His3172, His3174, His3176, His3178, Cys3185, His3187, Cys3194, and Cys3197. Positions Ala3265–Leu3417 constitute a (+)RNA virus helicase ATP-binding domain. ATP is bound at residue Gly3298 to Gln3305. In terms of domain architecture, (+)RNA virus helicase C-terminal spans Lys3418 to Val3546. Positions Glu3585–Gln3681 constitute an AV-Nsp11N/CoV-Nsp15M domain. The 123-residue stretch at Leu3683–Phe3805 folds into the NendoU domain. Catalysis depends on residues His3714, His3729, and Lys3758.

Belongs to the arteriviridae polyprotein family. Nsp1-alpha papain-like: Interacts with host RNF31. As to quaternary structure, interacts with host EIF2AK2; this interaction occurs in host stress granules and leads to EIF2AK2 inhibition. Interacts with host G3BP1; this interaction probably plays a role in Nsp1-beta-mediated inhibition of host EIF2AK2. In terms of assembly, interacts with host DDX18; this interaction redistributes host DDX18 to the cytoplasm. Interacts with host IFITM1. As to quaternary structure, interacts with host DDX5. In terms of assembly, interacts with host OTULIN. Interacts with host LGALS3. Specific enzymatic cleavages in vivo by its own proteases yield mature proteins. Nsp1 is autocleaved into two subunits, Nsp1-alpha and Nsp1-beta. There are two alternative pathways for processing. Either nsp4-5 is cleaved, which represents the major pathway or the nsp5-6 and nsp6-7 are processed, which represents the minor pathway. The major pathway occurs when nsp2 acts as a cofactor for nsp4.

Its subcellular location is the host nucleus. It is found in the host cytoplasm. The protein resides in the host membrane. It localises to the host endoplasmic reticulum. The protein localises to the host perinuclear region. It catalyses the reaction RNA(n) + a ribonucleoside 5'-triphosphate = RNA(n+1) + diphosphate. It carries out the reaction ATP + H2O = ADP + phosphate + H(+). The catalysed reaction is Thiol-dependent hydrolysis of ester, thioester, amide, peptide and isopeptide bonds formed by the C-terminal Gly of ubiquitin (a 76-residue protein attached to proteins as an intracellular targeting signal).. The enzyme catalyses uridylyl-uridylyl-ribonucleotide-RNA = a 3'-end uridylyl-2',3'-cyclophospho-uridine-RNA + a 5'-end dephospho-ribonucleoside-RNA. In terms of biological role, contains the activities necessary for the transcription of negative stranded RNA, leader RNA, subgenomic mRNAs and progeny virion RNA as well as proteinases responsible for the cleavage of the polyprotein into functional products. Functionally, inhibits host IFN-beta production. Plays a role in the degradation of the host transcriptional activator CREBBP protein. The degradation of host CREBBP which is a key component of the IFN enhanceosome is likely responsible for the inhibition of interferon mediated by Nsp1-alpha. Also participates in the inhibition of host NF-kappa-B activation by counteracting LUBAC-dependent induction of NF-kappa-B. Reduces host NEMO ubiquitination by blocking the interaction between the two LUBAC complex components RNF31 and SHARPIN. Its function is as follows. Plays a role in blocking host mRNA nuclear export to the cytoplasm and subversion of host protein synthesis. Additionally, inhibits the interferon-activated JAK/STAT signal transduction by mediating the ubiquitination and subsequent proteasomal degradation of host KPNA1. Repurposes the host antiviral stress granules into a proviral platform to counteract the EIF2AK2/PKR restriction, thereby regulating the host inflammatory response. Multifunctional protein that acts as a viral protease and as a viral antagonist of host immune response. Cleaves the nsp2/nsp3 site in the viral polyprotein. Displays deubiquitinating activity that cleaves both ubiquitinated and ISGylated products and therefore inhibits ubiquitin and ISG15-dependent host innate immunity. Also deubiquinates host NFKBIA, thereby interfering with NFKBIA degradation and impairing subsequent NF-kappa-B activation. In terms of biological role, plays a role in the inhibition of the immune response by interacting with host IFITM1. This interaction leads to the proteasomal degradation of the IFN-induced antiviral protein IFITM1. Functionally, cleaves the majority of cleavage sites present in the C-terminus of the polyprotein. Triggers host apoptosis through caspase-3, -8, and -9 activations. Subverts host innate immune responses through its protease activity. Targets the NF-kappa-B essential modulator NEMO and mediates its cleavage. Blocks host interferon beta induction and downstream signaling by cleaving mitochondrial MAVS, dislodging it from the mitochondria. Impairs host defense by cleaving host mRNA-decapping enzyme DCP1A to attenuate its antiviral activity. Its function is as follows. Plays a role in the initial induction of autophagosomes from host endoplasmic reticulum. Plays a role in the inhibition of host STAT3 signaling pathway by inducing the degradation of STAT3. In terms of biological role, responsible for replication and transcription of the viral RNA genome. Functionally, displays RNA and DNA duplex-unwinding activities with 5' to 3' polarity. Its function is as follows. Plays a role in viral transcription/replication and prevents the simultaneous activation of host cell dsRNA sensors, such as MDA5/IFIH1, OAS, PKR and NLRP3 inflammasome. Acts by degrading the 5'-polyuridines generated during replication of the poly(A) region of viral genomic and subgenomic RNAs. Catalyzes a two-step reaction in which a 2'3'-cyclic phosphate (2'3'-cP) is first generated by 2'-O transesterification, which is then hydrolyzed to a 3'-phosphate (3'-P). If not degraded, poly(U) RNA would hybridize with poly(A) RNA tails and activate host dsRNA sensors. Also plays a role in the inhibition of host type I interferon production by recruiting host OTULIN to promote removal of linear ubiquitination targeting host NEMO. This is Replicase polyprotein 1ab (rep) from Porcine reproductive and respiratory syndrome virus (strain 16244B) (PRRSV).